A 244-amino-acid polypeptide reads, in one-letter code: rRNA adenine N-6-methyltransferase (244 aa).

Residues N11, I13, G38, E59, D84, and N101 each contribute to the S-adenosyl-L-methionine site.

It belongs to the class I-like SAM-binding methyltransferase superfamily. rRNA adenine N(6)-methyltransferase family.

It carries out the reaction adenosine(2085) in 23S rRNA + 2 S-adenosyl-L-methionine = N(6)-dimethyladenosine(2085) in 23S rRNA + 2 S-adenosyl-L-homocysteine + 2 H(+). In terms of biological role, this protein produces a dimethylation of the adenine residue at position 2085 in 23S rRNA, resulting in reduced affinity between ribosomes and macrolide-lincosamide-streptogramin B antibiotics. The sequence is that of rRNA adenine N-6-methyltransferase (ermC) from Staphylococcus aureus.